The primary structure comprises 239 residues: RNA polymerase sigma-E factor (239 aa).

Positions 1–29 (MKKLKLRLTHLWYKLLMKLGLKSDEVYYI) are cleaved as a propeptide — removed by SpoIIGA. Residues 86–99 (DLISIGTIGLIKAV) carry the Polymerase core binding motif. The H-T-H motif DNA-binding region spans 206-225 (QKDVADMMGISQSYISRLEK).

This sequence belongs to the sigma-70 factor family. Proteolytically cleaved in the N-terminus by SpoIIGA to yield the active peptide.

In terms of biological role, sigma factors are initiation factors that promote the attachment of RNA polymerase to specific initiation sites and are then released. This sigma factor is responsible for the expression of sporulation specific genes. The polypeptide is RNA polymerase sigma-E factor (sigE) (Bacillus subtilis (strain 168)).